The chain runs to 908 residues: Oxysterol-binding protein 2 (908 aa).

The tract at residues Ser-42 to Thr-112 is disordered. Residues Glu-81–Pro-90 are compositionally biased toward polar residues. Residues Leu-179–Ala-271 enclose the PH domain. 3 disordered regions span residues Thr-279–Glu-299, Arg-413–Asp-445, and Leu-822–Arg-843. Ser-284 is modified (phosphoserine). Low complexity predominate over residues Ser-424 to Ser-437.

This sequence belongs to the OSBP family. In terms of assembly, interacts with CCDC159. As to expression, expressed in the testis (at protein level). Expressed in postmeiotic germ cells of the testis.

The protein localises to the membrane. Its subcellular location is the cytoplasmic vesicle. It localises to the secretory vesicle. It is found in the acrosome. Its function is as follows. Binds 7-ketocholesterol. Acts during spermatid development where its function is required prior to the removal of cytoplasm from the sperm head. This is Oxysterol-binding protein 2 (Osbp2) from Mus musculus (Mouse).